A 179-amino-acid polypeptide reads, in one-letter code: Cytochrome b6-f complex iron-sulfur subunit (179 aa).

Residues Leu21–Ile43 form a helical membrane-spanning segment. A Rieske domain is found at Gly61 to Leu162. Cys108, His110, Cys126, and His129 together coordinate [2Fe-2S] cluster. An intrachain disulfide couples Cys113 to Cys128.

It belongs to the Rieske iron-sulfur protein family. As to quaternary structure, the 4 large subunits of the cytochrome b6-f complex are cytochrome b6, subunit IV (17 kDa polypeptide, PetD), cytochrome f and the Rieske protein, while the 4 small subunits are PetG, PetL, PetM and PetN. The complex functions as a dimer. It depends on [2Fe-2S] cluster as a cofactor.

It localises to the cellular thylakoid membrane. The catalysed reaction is 2 oxidized [plastocyanin] + a plastoquinol + 2 H(+)(in) = 2 reduced [plastocyanin] + a plastoquinone + 4 H(+)(out). Component of the cytochrome b6-f complex, which mediates electron transfer between photosystem II (PSII) and photosystem I (PSI), cyclic electron flow around PSI, and state transitions. This is Cytochrome b6-f complex iron-sulfur subunit from Synechococcus elongatus (strain ATCC 33912 / PCC 7942 / FACHB-805) (Anacystis nidulans R2).